Here is a 506-residue protein sequence, read N- to C-terminus: Gallate 1-beta-glucosyltransferase 84A23 (506 aa).

Residue His20 is the Proton acceptor of the active site. His20 contacts an anthocyanidin. Residues Gln345, His360, Trp363, Asn364, Ser365, and Glu368 each contribute to the UDP-alpha-D-glucose site. An an anthocyanidin-binding site is contributed by Gly383. Residues Asp384 and Gln385 each contribute to the UDP-alpha-D-glucose site.

Belongs to the UDP-glycosyltransferase family. As to expression, expressed in roots of the seedlings.

The protein localises to the cytoplasm. The catalysed reaction is 3,4,5-trihydroxybenzoate + UDP-alpha-D-glucose = 1-O-galloyl-beta-D-glucose + UDP. It catalyses the reaction 3,4-dihydroxybenzoate + UDP-alpha-D-glucose = 1-O-(3,4-dihydroxy-benzoyl)-beta-D-glucose + UDP. The enzyme catalyses 4-hydroxybenzoate + UDP-alpha-D-glucose = 4-(beta-D-glucosyloxy)benzoate + UDP + H(+). It carries out the reaction (E)-cinnamate + UDP-alpha-D-glucose = 1-O-(trans-cinnamoyl)-beta-D-glucose + UDP. The catalysed reaction is (E)-sinapate + UDP-alpha-D-glucose = 1-O-(trans-sinapoyl)-beta-D-glucose + UDP. It catalyses the reaction (E)-4-coumarate + UDP-alpha-D-glucose = 1-O-(trans-4-coumaroyl)-beta-D-glucose + UDP. The enzyme catalyses (E)-caffeate + UDP-alpha-D-glucose = 1-O-[(E)-caffeoyl]-beta-D-glucose + UDP. It carries out the reaction (E)-ferulate + UDP-alpha-D-glucose = 1-O-[(E)-feruloyl]-beta-D-glucose + UDP. The catalysed reaction is genistein + UDP-alpha-D-glucose = genistein 7-O-beta-D-glucoside + UDP + H(+). It catalyses the reaction apigenin + UDP-alpha-D-glucose = apigenin 7-O-beta-D-glucoside + UDP + H(+). The enzyme catalyses luteolin + UDP-alpha-D-glucose = luteolin 7-O-beta-D-glucoside + UDP + H(+). Its function is as follows. Glucosyltransferase that catalyzes the formation of 1-O-beta-D-glucose esters with hydroxybenzoic acids and cinnamic acid including its derivatives as preferred glucosyl acceptors. Has significant activity with gallic acid (3,4,5-trihydroxybenzoic acid), 3,4-dihydroxybenzoic acid, 4-hydroxybenzoic acid, cinnamic acid, sinapic acid, coumaric acid, caffeic acid and ferulic acid in vitro. Gallic acid is the predicted native substrate of the enzyme, which thus catalyzes the formation of 1-O-galloyl-beta-D-glucose, the first committed step of hydrolyzable tannins (HTs) biosynthesis, with punicalagin isomers being the major HTs of pomegranate. Catalyzes the formation of flavonoid glucosides with genistein, apigenin and luteolin in vitro. Has low activity with benzoic acid, 2-hydroxybenzoic acid, 3-hydroxybenzoic acid, 2,4-dihydroxybenzoic acid, naringenin and quercetin. No activity with catechol, resveratrol, chlorogenic acid, catechin and epicatechin (building blocks of proanthocyanidins) or cyanidin, delphinidin and pelargonidin (the three anthocyanidins). This chain is Gallate 1-beta-glucosyltransferase 84A23, found in Punica granatum (Pomegranate).